The chain runs to 446 residues: Adenylosuccinate synthetase (446 aa).

Residues 21 to 27 and 49 to 51 each bind GTP; these read GDEGKGK and GHT. Catalysis depends on D22, which acts as the Proton acceptor. D22 and G49 together coordinate Mg(2+). IMP is bound by residues 22-25, 47-50, T141, R155, Q236, T251, and R319; these read DEGK and NAGH. H50 (proton donor) is an active-site residue. Residue 315 to 321 participates in substrate binding; that stretch reads VTTGRSR. GTP-binding positions include R321, 347 to 349, and 429 to 431; these read KLD and STS.

It belongs to the adenylosuccinate synthetase family. Homodimer. Requires Mg(2+) as cofactor.

It localises to the cytoplasm. It catalyses the reaction IMP + L-aspartate + GTP = N(6)-(1,2-dicarboxyethyl)-AMP + GDP + phosphate + 2 H(+). It participates in purine metabolism; AMP biosynthesis via de novo pathway; AMP from IMP: step 1/2. Functionally, plays an important role in the de novo pathway of purine nucleotide biosynthesis. Catalyzes the first committed step in the biosynthesis of AMP from IMP. The polypeptide is Adenylosuccinate synthetase (Polaromonas sp. (strain JS666 / ATCC BAA-500)).